A 957-amino-acid polypeptide reads, in one-letter code: Bifunctional glutamine synthetase adenylyltransferase/adenylyl-removing enzyme (957 aa).

The segment at 1–449 (MTQHLERPEL…VFDDIIGTDE (449 aa)) is adenylyl removase. Residues 457-957 (SEQYNEMWTM…QEYLVPSSDE (501 aa)) are adenylyl transferase.

This sequence belongs to the GlnE family. Requires Mg(2+) as cofactor.

It carries out the reaction [glutamine synthetase]-O(4)-(5'-adenylyl)-L-tyrosine + phosphate = [glutamine synthetase]-L-tyrosine + ADP. The catalysed reaction is [glutamine synthetase]-L-tyrosine + ATP = [glutamine synthetase]-O(4)-(5'-adenylyl)-L-tyrosine + diphosphate. Its function is as follows. Involved in the regulation of glutamine synthetase GlnA, a key enzyme in the process to assimilate ammonia. When cellular nitrogen levels are high, the C-terminal adenylyl transferase (AT) inactivates GlnA by covalent transfer of an adenylyl group from ATP to specific tyrosine residue of GlnA, thus reducing its activity. Conversely, when nitrogen levels are low, the N-terminal adenylyl removase (AR) activates GlnA by removing the adenylyl group by phosphorolysis, increasing its activity. The regulatory region of GlnE binds the signal transduction protein PII (GlnB) which indicates the nitrogen status of the cell. The chain is Bifunctional glutamine synthetase adenylyltransferase/adenylyl-removing enzyme from Photobacterium profundum (strain SS9).